We begin with the raw amino-acid sequence, 283 residues long: MEHKIVHVGDIPVANDKPFTLFAGMNVLESRDLAMQICEHYVKVTDKLGIPYVFKASFDKANRSSVHSYRGPGLEEGMKIFQELKETFGVKIITDVHTEAQAQPVADVVDVIQLPAFLARQTDLVEAMAKTGAVINVKKPQFMSPGQVGNIVEKFAECGNDKVILCERGSCHGYDNLVVDMLGFGVMKQASNGSPIIFDVTHSLQMRDPSGAASGGRREQTVELAKAGLATGIAGLFIEAHPNPDKARCDGPSALPLDKLEPFLAQMKALDDLIKSFAHIDIR.

The protein belongs to the KdsA family.

The protein resides in the cytoplasm. It carries out the reaction D-arabinose 5-phosphate + phosphoenolpyruvate + H2O = 3-deoxy-alpha-D-manno-2-octulosonate-8-phosphate + phosphate. It functions in the pathway carbohydrate biosynthesis; 3-deoxy-D-manno-octulosonate biosynthesis; 3-deoxy-D-manno-octulosonate from D-ribulose 5-phosphate: step 2/3. Its pathway is bacterial outer membrane biogenesis; lipopolysaccharide biosynthesis. The sequence is that of 2-dehydro-3-deoxyphosphooctonate aldolase from Vibrio cholerae serotype O1 (strain ATCC 39315 / El Tor Inaba N16961).